The following is a 1340-amino-acid chain: Early transcription factor large subunit homolog (1340 aa).

This sequence belongs to the asfivirus G1340L family.

The protein localises to the virion. Its function is as follows. Putative initation factor. This is Early transcription factor large subunit homolog from African swine fever virus (strain Badajoz 1971 Vero-adapted) (Ba71V).